A 950-amino-acid chain; its full sequence is MSDKKRINQIAKETGLSNTELVATAQSLGFEVKSHSSSVTAEQAEKIIQGVKTGTDTIVKPAEKTVKAKIKTVPETAKSKQEDHPRTFAGKAVVEDPAILARIKEKEEAKKAAKTEAEPIEEVITTEKPKVAEPVKKSEPKAAAKAEETKVEKVEAKAKTVTPKAEVKTENVADKKEPVVTEEKKKSLTQKPRIQIKVIKRAEDIKKEQAAARPEKKKFDKNRNDRNNRNDNRRPNQNGNGQGHSQGGNHYDKNRPAGQGQNQGQKRDKFASSGSSSTSDTFTPAASGKNNRRDRDRKKTDSNRDNTKDGNRKGGPLRVNDNRNQVRNARNSNWNQKGGRGRYQNNQSSSVPATQRKFHELPESLEYEVGMNVQDIAKSIKREPAEIIKKLFMMGTMVNQNQSLDEDTIELILMDYGVTPLKKVEEDKSDIERLFVEDGYLNEDKMVERPAVVTIMGHVDHGKTTLLDRFRESRVTEGEAGGITQHIGAYQIKTNGKKITFLDTPGHEAFTSMRARGASVTDITILVVAADDGVMPQTIEAINHSKAAGVPIIVAINKIDKPGANPQRVTQELTEHGVFPVAWDPENGSEFVEISAKFNQNLEELLDTVLLVAEVQELKADPSVRAIGTVVEARLDQGKGAIATLLVQQGTLHIQDPIVVGNTYGRVRTMTNDLGRRIKEAGPSTPIELTGLSDVPQAGDHFAVFEDEKAARAAGEERAKRAQLIKRQNTRRVNLDNLFDTLKEGQTKSVNIIIKADVQGSAEALAASLQKIEVEGVKVDIVHSAVGAISESDISLAAASNAIIIGFNVRPTGLAREQAAQEEVDIRLHSIIYKVIEEVETAMRGMLDPEFKEEIIGEAIVRETFNVSKVGTIAGFMVIRGKVTRDASVRVIREGVVIHDGAIASLKHFKDDVKEVGNAQEGGLMVEDFNDVEIDDTFEVYKMVEIERKK.

4 stretches are compositionally biased toward basic and acidic residues: residues Lys128–Ala158, Ala165–Lys186, Lys200–Arg234, and Asn291–Arg312. The segment at Lys128–Thr354 is disordered. 2 stretches are compositionally biased toward polar residues: residues Asn322–Gln336 and Tyr343–Ala353. The region spanning Glu448–Lys619 is the tr-type G domain. Residues Gly457–Thr464 are G1. GTP is bound at residue Gly457–Thr464. The segment at Gly482–His486 is G2. Positions Asp503 to Gly506 are G3. GTP contacts are provided by residues Asp503–His507 and Asn557–Asp560. Positions Asn557–Asp560 are G4. The segment at Ser595–Lys597 is G5.

It belongs to the TRAFAC class translation factor GTPase superfamily. Classic translation factor GTPase family. IF-2 subfamily.

Its subcellular location is the cytoplasm. In terms of biological role, one of the essential components for the initiation of protein synthesis. Protects formylmethionyl-tRNA from spontaneous hydrolysis and promotes its binding to the 30S ribosomal subunits. Also involved in the hydrolysis of GTP during the formation of the 70S ribosomal complex. The sequence is that of Translation initiation factor IF-2 from Lactococcus lactis subsp. cremoris (strain MG1363).